The sequence spans 278 residues: Octanoyltransferase LipM (278 aa).

The BPL/LPL catalytic domain occupies 33-248; that stretch reads KKMPPTIRFY…GFEKGLDVEL (216 aa). Catalysis depends on C150, which acts as the Acyl-thioester intermediate.

It belongs to the octanoyltransferase LipM family. In terms of assembly, monomer.

It carries out the reaction octanoyl-[ACP] + L-lysyl-[protein] = N(6)-octanoyl-L-lysyl-[protein] + holo-[ACP] + H(+). It functions in the pathway protein modification; protein lipoylation via endogenous pathway; protein N(6)-(lipoyl)lysine from octanoyl-[acyl-carrier-protein]. Catalyzes the transfer of endogenously produced octanoic acid from octanoyl-acyl-carrier-protein onto the lipoyl domain of GcvH, an intermediate carrier during protein lipoylation. The chain is Octanoyltransferase LipM from Bacillus anthracis.